Here is a 1059-residue protein sequence, read N- to C-terminus: Nonsense-mediated mRNA decay factor SMG7 (1059 aa).

TPR repeat units lie at residues 149-183 (DQQS…LGDL) and 184-217 (ARYK…WPAS). Polar residues predominate over residues 806 to 817 (SHVSPAHSQSTS). Disordered regions lie at residues 806 to 826 (SHVS…KWSP), 927 to 955 (HLGP…SGNN), 987 to 1015 (SGKP…QVPT), and 1040 to 1059 (STQL…RHFV).

As to quaternary structure, interacts with EXA1. Expressed in flowers and at lower levels in stems and leaves.

The protein localises to the cytoplasm. The protein resides in the P-body. Functionally, plays multiple roles in growth and development. Involved in nonsense-mediated mRNA decay (NMD). May provide a link to the mRNA degradation machinery to initiate NMD and serve as an adapter for UPF proteins function. Required for meiotic progression through anaphase II of pollen mother cells. May counteract cyclin-dependent kinase (CDK) activity at the end of meiosis. May play a role in plant defense through its involvement in NMD. Together with EXA1, helps to restrict cell death induction during pathogen infection in a salicylic acid- (SA) and reactive oxygen species- (ROS) independent manner. This Arabidopsis thaliana (Mouse-ear cress) protein is Nonsense-mediated mRNA decay factor SMG7.